A 245-amino-acid chain; its full sequence is tRNA1(Val) (adenine(37)-N6)-methyltransferase (245 aa).

This sequence belongs to the methyltransferase superfamily. tRNA (adenine-N(6)-)-methyltransferase family.

The protein resides in the cytoplasm. The catalysed reaction is adenosine(37) in tRNA1(Val) + S-adenosyl-L-methionine = N(6)-methyladenosine(37) in tRNA1(Val) + S-adenosyl-L-homocysteine + H(+). Its function is as follows. Specifically methylates the adenine in position 37 of tRNA(1)(Val) (anticodon cmo5UAC). The sequence is that of tRNA1(Val) (adenine(37)-N6)-methyltransferase from Salmonella typhi.